A 150-amino-acid polypeptide reads, in one-letter code: Ribosome maturation factor RimP (150 aa).

It belongs to the RimP family.

The protein resides in the cytoplasm. In terms of biological role, required for maturation of 30S ribosomal subunits. The chain is Ribosome maturation factor RimP from Acaryochloris marina (strain MBIC 11017).